Consider the following 255-residue polypeptide: MRLIALPAFDDNYIWALIAADGRAIIVDPGQAEPVLAAAQHQGLVPSAVLLTHHHGDHIGGVAELQQRWPDLELFGPADERIPADAHQVGHGERLRLLDVEFQVLQVPGHTRSHIAFVADGYLFSGDTLFSLGCGRMFEGTAPQMFDSLQRLASLPGETLVCCGHEYTLANAAFALHVDPTNAALQRRQQEAQAMRHAARPTLPISLKSELATNPFLRTGRPEIRAAVAPRAAGELSSEVDVFAELRRWKDEFRS.

Zn(2+) is bound by residues His53, His55, Asp57, His58, His110, Asp127, and His165.

This sequence belongs to the metallo-beta-lactamase superfamily. Glyoxalase II family. In terms of assembly, monomer. The cofactor is Zn(2+).

The catalysed reaction is an S-(2-hydroxyacyl)glutathione + H2O = a 2-hydroxy carboxylate + glutathione + H(+). Its pathway is secondary metabolite metabolism; methylglyoxal degradation; (R)-lactate from methylglyoxal: step 2/2. Thiolesterase that catalyzes the hydrolysis of S-D-lactoyl-glutathione to form glutathione and D-lactic acid. The polypeptide is Hydroxyacylglutathione hydrolase (Xanthomonas euvesicatoria pv. vesicatoria (strain 85-10) (Xanthomonas campestris pv. vesicatoria)).